Reading from the N-terminus, the 961-residue chain is G protein-coupled receptor GPR1 (961 aa).

Residues 1–56 are Extracellular-facing; it reads MITEGFPPNLNALKGSSLLEKRVDSLRQLNTTTVNQLLGLPGMTSTFTAPQLLQLR. Residues 57–79 form a helical membrane-spanning segment; that stretch reads IIAITASAVSLIAGCLGMFFLSK. At 80–91 the chain is on the cytoplasmic side; it reads MDKRRKVFRHDL. Residues 92–114 traverse the membrane as a helical segment; the sequence is IAFLIICDFLKAFILMIYPMIIL. Residues 115-133 lie on the Extracellular side of the membrane; sequence INNSVYATPAFFNTLGWFT. Residues 134–156 traverse the membrane as a helical segment; the sequence is AFAIEGADMAIMIFAIHFAILIF. The Cytoplasmic portion of the chain corresponds to 157–178; sequence KPNWKWRNKRSGNMEGGLYKKR. A helical transmembrane segment spans residues 179-198; that stretch reads SYIWPITALVPAILASLAFI. At 199–250 the chain is on the extracellular side; it reads NYNKLNDDSDTTIILDNNNYNFPDSPRQGGYKPWSAWCYLPPKPYWYKIVLS. A helical membrane pass occupies residues 251 to 273; sequence WGPRYFIIIFIFAVYLSIYIFIT. The Cytoplasmic portion of the chain corresponds to 274 to 619; the sequence is SESKRIKAQI…KKRRAQIQKN (346 aa). Residue serine 373 is modified to Phosphoserine. The tract at residues 468 to 568 is disordered; it reads AMYDNKNDNS…PADNIPTLSN (101 aa). A compositionally biased stretch (low complexity) spans 502–558; sequence NNNNDNDNDNNNSNNNNNNNNNNNNNNNNNNNNNNNNNNNNNNSNNIKNNVDNNNTN. A helical membrane pass occupies residues 620 to 642; that stretch reads LRAIFIYPLSYIGIWLFPIIADA. Residues 643–822 are Extracellular-facing; it reads LQYNHEIKHG…AMLNNITAEE (180 aa). The span at 783–796 shows a compositional bias: basic and acidic residues; it reads DSNDNKRTESDETK. Residues 783 to 805 are disordered; the sequence is DSNDNKRTESDETKTNSSDRSLP. The helical transmembrane segment at 823–843 threads the bilayer; that stretch reads VEVPLFWRIIHHIPMLGGIDL. The Cytoplasmic portion of the chain corresponds to 844–961; that stretch reads DELNRLLKIR…LIAFLRNGPL (118 aa). Serine 903 is modified (phosphoserine).

Belongs to the G-protein coupled receptor GPR1/git3 family.

The protein localises to the cell membrane. Its function is as follows. Seems to associate with GPA2 and act as G protein-coupled receptor that senses glucose and controls filamentous growth. It acts upstream of adenylate cyclase and is required for glucose activation of cAMP synthesis in concert with a glucose phosphorylation-dependent mechanism. The sequence is that of G protein-coupled receptor GPR1 (GPR1) from Saccharomyces cerevisiae (strain ATCC 204508 / S288c) (Baker's yeast).